The chain runs to 346 residues: Holliday junction branch migration complex subunit RuvB (346 aa).

The tract at residues 1-182 (MSEAARLIAP…FGIPVRLNFY (182 aa)) is large ATPase domain (RuvB-L). Residues L21, R22, G63, K66, T67, T68, 129–131 (EDF), R172, Y182, and R219 each bind ATP. Residue T67 coordinates Mg(2+). The small ATPAse domain (RuvB-S) stretch occupies residues 183–253 (TVEELELIVR…IADEALTRLL (71 aa)). The tract at residues 256 to 346 (SMGLDQLDRR…SQFRLTLEDD (91 aa)) is head domain (RuvB-H). R292, R311, and R316 together coordinate DNA.

It belongs to the RuvB family. Homohexamer. Forms an RuvA(8)-RuvB(12)-Holliday junction (HJ) complex. HJ DNA is sandwiched between 2 RuvA tetramers; dsDNA enters through RuvA and exits via RuvB. An RuvB hexamer assembles on each DNA strand where it exits the tetramer. Each RuvB hexamer is contacted by two RuvA subunits (via domain III) on 2 adjacent RuvB subunits; this complex drives branch migration. In the full resolvosome a probable DNA-RuvA(4)-RuvB(12)-RuvC(2) complex forms which resolves the HJ.

It is found in the cytoplasm. It carries out the reaction ATP + H2O = ADP + phosphate + H(+). In terms of biological role, the RuvA-RuvB-RuvC complex processes Holliday junction (HJ) DNA during genetic recombination and DNA repair, while the RuvA-RuvB complex plays an important role in the rescue of blocked DNA replication forks via replication fork reversal (RFR). RuvA specifically binds to HJ cruciform DNA, conferring on it an open structure. The RuvB hexamer acts as an ATP-dependent pump, pulling dsDNA into and through the RuvAB complex. RuvB forms 2 homohexamers on either side of HJ DNA bound by 1 or 2 RuvA tetramers; 4 subunits per hexamer contact DNA at a time. Coordinated motions by a converter formed by DNA-disengaged RuvB subunits stimulates ATP hydrolysis and nucleotide exchange. Immobilization of the converter enables RuvB to convert the ATP-contained energy into a lever motion, pulling 2 nucleotides of DNA out of the RuvA tetramer per ATP hydrolyzed, thus driving DNA branch migration. The RuvB motors rotate together with the DNA substrate, which together with the progressing nucleotide cycle form the mechanistic basis for DNA recombination by continuous HJ branch migration. Branch migration allows RuvC to scan DNA until it finds its consensus sequence, where it cleaves and resolves cruciform DNA. This Sinorhizobium medicae (strain WSM419) (Ensifer medicae) protein is Holliday junction branch migration complex subunit RuvB.